A 96-amino-acid polypeptide reads, in one-letter code: Large ribosomal subunit protein eL21 (96 aa).

This sequence belongs to the eukaryotic ribosomal protein eL21 family.

The polypeptide is Large ribosomal subunit protein eL21 (Methanoregula boonei (strain DSM 21154 / JCM 14090 / 6A8)).